A 261-amino-acid polypeptide reads, in one-letter code: Triosephosphate isomerase (261 aa).

Residue Asn-10–Lys-12 participates in substrate binding. Residue His-100 is the Electrophile of the active site. Glu-172 (proton acceptor) is an active-site residue. Residues Gly-178, Ser-218, and Gly-239–Gly-240 contribute to the substrate site.

Belongs to the triosephosphate isomerase family. As to quaternary structure, homodimer.

It is found in the cytoplasm. It catalyses the reaction D-glyceraldehyde 3-phosphate = dihydroxyacetone phosphate. It participates in carbohydrate biosynthesis; gluconeogenesis. The protein operates within carbohydrate degradation; glycolysis; D-glyceraldehyde 3-phosphate from glycerone phosphate: step 1/1. Functionally, involved in the gluconeogenesis. Catalyzes stereospecifically the conversion of dihydroxyacetone phosphate (DHAP) to D-glyceraldehyde-3-phosphate (G3P). In Saccharopolyspora erythraea (strain ATCC 11635 / DSM 40517 / JCM 4748 / NBRC 13426 / NCIMB 8594 / NRRL 2338), this protein is Triosephosphate isomerase.